We begin with the raw amino-acid sequence, 384 residues long: Galactokinase (384 aa).

Residue Glu-34–Asp-37 coordinates substrate. Ser-123–Ser-129 is an ATP binding site. Ser-129 and Glu-161 together coordinate Mg(2+). The Proton acceptor role is filled by Asp-173. Substrate is bound at residue Tyr-222.

The protein belongs to the GHMP kinase family. GalK subfamily.

It localises to the cytoplasm. The catalysed reaction is alpha-D-galactose + ATP = alpha-D-galactose 1-phosphate + ADP + H(+). Its pathway is carbohydrate metabolism; galactose metabolism. In terms of biological role, catalyzes the transfer of the gamma-phosphate of ATP to D-galactose to form alpha-D-galactose-1-phosphate (Gal-1-P). The sequence is that of Galactokinase from Actinobacillus pleuropneumoniae (Haemophilus pleuropneumoniae).